A 196-amino-acid chain; its full sequence is Molybdenum cofactor guanylyltransferase (196 aa).

GTP contacts are provided by residues Leu12–Gly14, Lys25, Asn53, Asp71, and Asp101. Residue Asp101 coordinates Mg(2+).

This sequence belongs to the MobA family. Monomer. The cofactor is Mg(2+).

It is found in the cytoplasm. It catalyses the reaction Mo-molybdopterin + GTP + H(+) = Mo-molybdopterin guanine dinucleotide + diphosphate. Transfers a GMP moiety from GTP to Mo-molybdopterin (Mo-MPT) cofactor (Moco or molybdenum cofactor) to form Mo-molybdopterin guanine dinucleotide (Mo-MGD) cofactor. The sequence is that of Molybdenum cofactor guanylyltransferase from Bordetella petrii (strain ATCC BAA-461 / DSM 12804 / CCUG 43448).